The following is a 638-amino-acid chain: Chaperone protein DnaK (638 aa).

Phosphothreonine; by autocatalysis is present on Thr198. Residues Lys600 to Lys638 form a disordered region. Acidic residues predominate over residues Ala628–Lys638.

The protein belongs to the heat shock protein 70 family.

Its function is as follows. Acts as a chaperone. This chain is Chaperone protein DnaK, found in Geobacter metallireducens (strain ATCC 53774 / DSM 7210 / GS-15).